The sequence spans 123 residues: Small ribosomal subunit protein uS12 (123 aa).

The disordered stretch occupies residues 1–45; the sequence is MPTINQLIRKKRQSGATRKKSPALQKSPQKRGVCLQVKTKTPKKP. Residues 8–21 are compositionally biased toward basic residues; sequence IRKKRQSGATRKKS.

Belongs to the universal ribosomal protein uS12 family. In terms of assembly, part of the 30S ribosomal subunit. Contacts proteins S8 and S17. May interact with IF1 in the 30S initiation complex.

Functionally, with S4 and S5 plays an important role in translational accuracy. Its function is as follows. Interacts with and stabilizes bases of the 16S rRNA that are involved in tRNA selection in the A site and with the mRNA backbone. Located at the interface of the 30S and 50S subunits, it traverses the body of the 30S subunit contacting proteins on the other side and probably holding the rRNA structure together. The combined cluster of proteins S8, S12 and S17 appears to hold together the shoulder and platform of the 30S subunit. The protein is Small ribosomal subunit protein uS12 of Chlamydia muridarum (strain MoPn / Nigg).